The primary structure comprises 75 residues: UPF0352 protein plu2871 (75 aa).

It belongs to the UPF0352 family.

This chain is UPF0352 protein plu2871, found in Photorhabdus laumondii subsp. laumondii (strain DSM 15139 / CIP 105565 / TT01) (Photorhabdus luminescens subsp. laumondii).